Here is a 417-residue protein sequence, read N- to C-terminus: Imidazolonepropionase (417 aa).

The Fe(3+) site is built by histidine 80 and histidine 82. Positions 80 and 82 each coordinate Zn(2+). The 4-imidazolone-5-propanoate site is built by arginine 89, tyrosine 152, and histidine 187. Tyrosine 152 contacts N-formimidoyl-L-glutamate. Histidine 252 provides a ligand contact to Fe(3+). Histidine 252 serves as a coordination point for Zn(2+). Glutamate 255 contributes to the 4-imidazolone-5-propanoate binding site. A Fe(3+)-binding site is contributed by aspartate 326. Aspartate 326 lines the Zn(2+) pocket. N-formimidoyl-L-glutamate is bound by residues asparagine 328 and glycine 330. Serine 331 contributes to the 4-imidazolone-5-propanoate binding site.

Belongs to the metallo-dependent hydrolases superfamily. HutI family. Zn(2+) is required as a cofactor. Fe(3+) serves as cofactor.

The protein localises to the cytoplasm. The catalysed reaction is 4-imidazolone-5-propanoate + H2O = N-formimidoyl-L-glutamate. Its pathway is amino-acid degradation; L-histidine degradation into L-glutamate; N-formimidoyl-L-glutamate from L-histidine: step 3/3. Its function is as follows. Catalyzes the hydrolytic cleavage of the carbon-nitrogen bond in imidazolone-5-propanoate to yield N-formimidoyl-L-glutamate. It is the third step in the universal histidine degradation pathway. This is Imidazolonepropionase from Bacteroides fragilis (strain YCH46).